The sequence spans 60 residues: MPITDLHCPRCGSDVKMGLPMGATVKSVTAASRQEPTSDTQKVRTVECRNDHEFFVRFEW.

A C4-type; atypical zinc finger spans residues 8–52 (CPRCGSDVKMGLPMGATVKSVTAASRQEPTSDTQKVRTVECRNDH).

This sequence belongs to the Brz family.

Its function is as follows. Activates transcription of bacteriorhodopsin (bop) and phytoene synthase (crtB1). May interact with DNA or RNA via the zinc finger motif. The chain is Transcriptional regulator Brz (brz) from Halobacterium salinarum (strain ATCC 29341 / DSM 671 / R1).